The following is a 435-amino-acid chain: Probable glycine dehydrogenase (decarboxylating) subunit 1 (435 aa).

This sequence belongs to the GcvP family. N-terminal subunit subfamily. The glycine cleavage system is composed of four proteins: P, T, L and H. In this organism, the P 'protein' is a heterodimer of two subunits.

It carries out the reaction N(6)-[(R)-lipoyl]-L-lysyl-[glycine-cleavage complex H protein] + glycine + H(+) = N(6)-[(R)-S(8)-aminomethyldihydrolipoyl]-L-lysyl-[glycine-cleavage complex H protein] + CO2. The glycine cleavage system catalyzes the degradation of glycine. The P protein binds the alpha-amino group of glycine through its pyridoxal phosphate cofactor; CO(2) is released and the remaining methylamine moiety is then transferred to the lipoamide cofactor of the H protein. This Coprothermobacter proteolyticus (strain ATCC 35245 / DSM 5265 / OCM 4 / BT) protein is Probable glycine dehydrogenase (decarboxylating) subunit 1.